Here is a 1291-residue protein sequence, read N- to C-terminus: Vacuolating cytotoxin autotransporter (1291 aa).

The N-terminal stretch at methionine 1–alanine 33 is a signal peptide. The segment at proline 326–glutamate 374 is disordered. Composition is skewed to polar residues over residues lysine 338–alanine 347 and serine 354–glutamate 374. The Autotransporter domain occupies lysine 1018–phenylalanine 1291.

The protein localises to the periplasm. It localises to the secreted. It is found in the cell surface. The protein resides in the cell outer membrane. In terms of biological role, induces vacuolation of eukaryotic cells. Causes ulceration and gastric lesions. In Helicobacter pylori (Campylobacter pylori), this protein is Vacuolating cytotoxin autotransporter (vacA).